We begin with the raw amino-acid sequence, 133 residues long: Ribosome-binding factor A (133 aa).

It belongs to the RbfA family. Monomer. Binds 30S ribosomal subunits, but not 50S ribosomal subunits or 70S ribosomes.

The protein resides in the cytoplasm. Its function is as follows. One of several proteins that assist in the late maturation steps of the functional core of the 30S ribosomal subunit. Associates with free 30S ribosomal subunits (but not with 30S subunits that are part of 70S ribosomes or polysomes). Required for efficient processing of 16S rRNA. May interact with the 5'-terminal helix region of 16S rRNA. The polypeptide is Ribosome-binding factor A (Citrobacter koseri (strain ATCC BAA-895 / CDC 4225-83 / SGSC4696)).